We begin with the raw amino-acid sequence, 269 residues long: 4-hydroxy-tetrahydrodipicolinate reductase (269 aa).

NAD(+) contacts are provided by residues 8–13 (GAAGRM), Glu34, 98–100 (GTT), and 122–125 (APNY). The active-site Proton donor/acceptor is His155. (S)-2,3,4,5-tetrahydrodipicolinate is bound at residue His156. Lys159 acts as the Proton donor in catalysis. Position 165 to 166 (165 to 166 (GT)) interacts with (S)-2,3,4,5-tetrahydrodipicolinate.

The protein belongs to the DapB family.

It is found in the cytoplasm. It catalyses the reaction (S)-2,3,4,5-tetrahydrodipicolinate + NAD(+) + H2O = (2S,4S)-4-hydroxy-2,3,4,5-tetrahydrodipicolinate + NADH + H(+). The enzyme catalyses (S)-2,3,4,5-tetrahydrodipicolinate + NADP(+) + H2O = (2S,4S)-4-hydroxy-2,3,4,5-tetrahydrodipicolinate + NADPH + H(+). Its pathway is amino-acid biosynthesis; L-lysine biosynthesis via DAP pathway; (S)-tetrahydrodipicolinate from L-aspartate: step 4/4. In terms of biological role, catalyzes the conversion of 4-hydroxy-tetrahydrodipicolinate (HTPA) to tetrahydrodipicolinate. The protein is 4-hydroxy-tetrahydrodipicolinate reductase of Aliivibrio salmonicida (strain LFI1238) (Vibrio salmonicida (strain LFI1238)).